Here is a 59-residue protein sequence, read N- to C-terminus: Protein translocase subunit SecE (59 aa).

Residues 33–53 (GAGIALVGLLGFIIFAVMTFV) form a helical membrane-spanning segment.

It belongs to the SecE/SEC61-gamma family. Component of the Sec protein translocase complex. Heterotrimer consisting of SecY (alpha), SecG (beta) and SecE (gamma) subunits. The heterotrimers can form oligomers, although 1 heterotrimer is thought to be able to translocate proteins. Interacts with the ribosome. May interact with SecDF, and other proteins may be involved.

The protein resides in the cell membrane. In terms of biological role, essential subunit of the Sec protein translocation channel SecYEG. Clamps together the 2 halves of SecY. May contact the channel plug during translocation. This is Protein translocase subunit SecE from Haloarcula marismortui (strain ATCC 43049 / DSM 3752 / JCM 8966 / VKM B-1809) (Halobacterium marismortui).